The primary structure comprises 450 residues: Cell division cycle 20.5, cofactor of APC complex (450 aa).

WD repeat units follow at residues 129-166, 171-210, 214-251, 255-294, 304-346, 348-389, and 392-431; these read ADDFYLNLLDWGSSNVLAIALGDTVYLWDASSGSTYKL, EEEGPVTSINWTQDGLDLAIGLDNSEVQLWDCVSNRQVRT, GHESRVGSLAWNNHILTTGGMDGKIVNNDVRIRSSIVE, GHTEEVCGLKWSESGKKLASGGNDNVVHIWDHRSVASSNP, EHTA…CLNS, ETGS…KMAE, and GHTSRVLFMAQSPDGCTVASAAGDETLRLWNVFGEPPKTT.

Belongs to the WD repeat CDC20/Fizzy family. As to quaternary structure, the APC/C is composed of at least 11 subunits that stay tightly associated throughout the cell cycle. Binds to GIG1 and PYM. Part of the mitotic checkpoint complex (MCC); interacts with MAD2 and BUB1.

The protein localises to the nucleus. It participates in protein modification; protein ubiquitination. Functionally, component of the anaphase promoting complex/cyclosome (APC/C), a cell cycle-regulated E3 ubiquitin-protein ligase complex that controls progression through mitosis and the G1 phase of the cell cycle. The chain is Cell division cycle 20.5, cofactor of APC complex (CDC20-5) from Arabidopsis thaliana (Mouse-ear cress).